Here is a 284-residue protein sequence, read N- to C-terminus: Polyamine aminopropyltransferase (284 aa).

Residues 4-238 form the PABS domain; sequence EVWNTERLHD…GPMALGWGSH (235 aa). Gln-33 contributes to the S-methyl-5'-thioadenosine binding site. Positions 64 and 88 each coordinate spermidine. S-methyl-5'-thioadenosine is bound by residues Glu-108 and 140–141; that span reads DG. The active-site Proton acceptor is the Asp-158. A spermidine-binding site is contributed by 158-161; it reads DSTD. Pro-165 lines the S-methyl-5'-thioadenosine pocket.

Belongs to the spermidine/spermine synthase family. Homodimer or homotetramer.

The protein localises to the cytoplasm. The enzyme catalyses S-adenosyl 3-(methylsulfanyl)propylamine + putrescine = S-methyl-5'-thioadenosine + spermidine + H(+). Its pathway is amine and polyamine biosynthesis; spermidine biosynthesis; spermidine from putrescine: step 1/1. Catalyzes the irreversible transfer of a propylamine group from the amino donor S-adenosylmethioninamine (decarboxy-AdoMet) to putrescine (1,4-diaminobutane) to yield spermidine. The protein is Polyamine aminopropyltransferase of Ruegeria sp. (strain TM1040) (Silicibacter sp.).